The chain runs to 196 residues: Carnitine operon protein CaiE (196 aa).

Positions 173 to 196 (TQPLRQMEENRPRLQGTTDVTPKR) are disordered. The span at 187–196 (QGTTDVTPKR) shows a compositional bias: polar residues.

The protein belongs to the transferase hexapeptide repeat family.

It functions in the pathway amine and polyamine metabolism; carnitine metabolism. In terms of biological role, overproduction of CaiE stimulates the activity of CaiB and CaiD. The sequence is that of Carnitine operon protein CaiE from Shigella flexneri serotype 5b (strain 8401).